Here is a 106-residue protein sequence, read N- to C-terminus: Large ribosomal subunit protein eL42 (106 aa).

Belongs to the eukaryotic ribosomal protein eL42 family.

This is Large ribosomal subunit protein eL42 (RPL44) from Debaryomyces hansenii (strain ATCC 36239 / CBS 767 / BCRC 21394 / JCM 1990 / NBRC 0083 / IGC 2968) (Yeast).